The chain runs to 407 residues: Dephospho-CoA kinase (407 aa).

Residues 3–201 (RIGLTGGIGA…ERIVPFAHNL (199 aa)) enclose the DPCK domain. Residue 11–16 (GAGKSA) participates in ATP binding. The tract at residues 196-407 (PFAHNLSTRQ…DWADSTGWKP (212 aa)) is UPF0157.

In the N-terminal section; belongs to the CoaE family. The protein in the C-terminal section; belongs to the UPF0157 (GrpB) family.

It localises to the cytoplasm. It carries out the reaction 3'-dephospho-CoA + ATP = ADP + CoA + H(+). It participates in cofactor biosynthesis; coenzyme A biosynthesis; CoA from (R)-pantothenate: step 5/5. In terms of biological role, catalyzes the phosphorylation of the 3'-hydroxyl group of dephosphocoenzyme A to form coenzyme A. This Mycolicibacterium paratuberculosis (strain ATCC BAA-968 / K-10) (Mycobacterium paratuberculosis) protein is Dephospho-CoA kinase.